A 442-amino-acid polypeptide reads, in one-letter code: Histidine--tRNA ligase (442 aa).

Belongs to the class-II aminoacyl-tRNA synthetase family. Homodimer.

It is found in the cytoplasm. It catalyses the reaction tRNA(His) + L-histidine + ATP = L-histidyl-tRNA(His) + AMP + diphosphate + H(+). The polypeptide is Histidine--tRNA ligase (Psychrobacter arcticus (strain DSM 17307 / VKM B-2377 / 273-4)).